The sequence spans 127 residues: Ribosome-binding factor A (127 aa).

This sequence belongs to the RbfA family. In terms of assembly, monomer. Binds 30S ribosomal subunits, but not 50S ribosomal subunits or 70S ribosomes.

It is found in the cytoplasm. One of several proteins that assist in the late maturation steps of the functional core of the 30S ribosomal subunit. Associates with free 30S ribosomal subunits (but not with 30S subunits that are part of 70S ribosomes or polysomes). Required for efficient processing of 16S rRNA. May interact with the 5'-terminal helix region of 16S rRNA. The polypeptide is Ribosome-binding factor A (Rickettsia typhi (strain ATCC VR-144 / Wilmington)).